Consider the following 208-residue polypeptide: Small ribosomal subunit protein uS4 (208 aa).

An S4 RNA-binding domain is found at 98 to 160 (CRLDNVVYRM…AKKQSRIQLA (63 aa)).

It belongs to the universal ribosomal protein uS4 family. Part of the 30S ribosomal subunit. Contacts protein S5. The interaction surface between S4 and S5 is involved in control of translational fidelity.

Its function is as follows. One of the primary rRNA binding proteins, it binds directly to 16S rRNA where it nucleates assembly of the body of the 30S subunit. In terms of biological role, with S5 and S12 plays an important role in translational accuracy. The sequence is that of Small ribosomal subunit protein uS4 from Vesicomyosocius okutanii subsp. Calyptogena okutanii (strain HA).